The chain runs to 503 residues: DnaJ homolog subfamily C member 3 (503 aa).

The signal sequence occupies residues 1-31 (MVSAAASAGRLGSALPFLLVLLDLQYQGAEC). 9 TPR repeats span residues 37 to 70 (VEKQ…DSDN), 71 to 104 (YIAY…KQDF), 105 to 137 (TSRL…NPSN), 153 to 186 (LQRL…CVWD), 187 to 220 (AELR…KSDN), 221 to 254 (TEAF…DQDH), 267 to 300 (LNKQ…EPDV), 305 to 338 (TRAK…EPTN), and 339 to 372 (VNAL…SEND). Cys-247 and Cys-257 form a disulfide bridge. A disulfide bridge connects residues Cys-312 and Cys-328. The flexible linker stretch occupies residues 374-392 (QIREGLERAQRMLKQSQKR). In terms of domain architecture, J spans 393–461 (DYYKILGVKR…EMRRKFDAGE (69 aa)).

It localises to the endoplasmic reticulum. In terms of biological role, may be involved in the unfolded protein response (UPR) during ER stress. The polypeptide is DnaJ homolog subfamily C member 3 (DNAJC3) (Gallus gallus (Chicken)).